The sequence spans 338 residues: tRNA N6-adenosine threonylcarbamoyltransferase (338 aa).

Residues histidine 111 and histidine 115 each coordinate Fe cation. Substrate contacts are provided by residues 134–138 (LVSGG), aspartate 167, glycine 180, and asparagine 272. Aspartate 300 is a binding site for Fe cation.

Belongs to the KAE1 / TsaD family. Fe(2+) serves as cofactor.

The protein localises to the cytoplasm. The enzyme catalyses L-threonylcarbamoyladenylate + adenosine(37) in tRNA = N(6)-L-threonylcarbamoyladenosine(37) in tRNA + AMP + H(+). Functionally, required for the formation of a threonylcarbamoyl group on adenosine at position 37 (t(6)A37) in tRNAs that read codons beginning with adenine. Is involved in the transfer of the threonylcarbamoyl moiety of threonylcarbamoyl-AMP (TC-AMP) to the N6 group of A37, together with TsaE and TsaB. TsaD likely plays a direct catalytic role in this reaction. The protein is tRNA N6-adenosine threonylcarbamoyltransferase of Shewanella halifaxensis (strain HAW-EB4).